A 251-amino-acid chain; its full sequence is MSEHVYNLLKNHHSVRKFKKEPISEAHIKQLVEAGQNASTSSYLQAYSIIGINDPEIKEELKEVSGQPYVVENGYLFVFVMDYYRHSIINEESKHDMQTSFESAEGLLVGTIDATLVAQNIAATAEDMGYGMVYLGSLRNDVERVREILELPKHTFPLFGMALGIPEDDENGSPKPRLPFEHVFHANKYDSDKDSQRETLKAYDQTVSDYYSSRTNGERTESWSNQVANFMSAKQRLDMLEQLNKSGFIKK.

It belongs to the flavin oxidoreductase frp family. The cofactor is FMN.

Functionally, reduces FMN, organic nitro compounds and disulfide DTNB. Involved in maintenance of the cellular redox state and the disulfide stress response. This Staphylococcus saprophyticus subsp. saprophyticus (strain ATCC 15305 / DSM 20229 / NCIMB 8711 / NCTC 7292 / S-41) protein is NADPH-dependent oxidoreductase (nfrA).